A 430-amino-acid chain; its full sequence is Histidine--tRNA ligase (430 aa).

Belongs to the class-II aminoacyl-tRNA synthetase family. As to quaternary structure, homodimer.

It is found in the cytoplasm. The catalysed reaction is tRNA(His) + L-histidine + ATP = L-histidyl-tRNA(His) + AMP + diphosphate + H(+). This Gloeothece citriformis (strain PCC 7424) (Cyanothece sp. (strain PCC 7424)) protein is Histidine--tRNA ligase.